A 306-amino-acid polypeptide reads, in one-letter code: 1-aminocyclopropane-1-carboxylate oxidase (306 aa).

A Fe2OG dioxygenase domain is found at 153–253; the sequence is PFFGTKVSHY…RRSIASFYNP (101 aa). Residues H177, D179, and H234 each contribute to the Fe cation site.

This sequence belongs to the iron/ascorbate-dependent oxidoreductase family. It depends on Fe cation as a cofactor.

It catalyses the reaction 1-aminocyclopropane-1-carboxylate + L-ascorbate + O2 = ethene + L-dehydroascorbate + hydrogen cyanide + CO2 + 2 H2O. It participates in alkene biosynthesis; ethylene biosynthesis via S-adenosyl-L-methionine; ethylene from S-adenosyl-L-methionine: step 2/2. The sequence is that of 1-aminocyclopropane-1-carboxylate oxidase (MAO1B) from Musa acuminata (Banana).